We begin with the raw amino-acid sequence, 180 residues long: Bifunctional protein PyrR (180 aa).

The short motif at 101–113 (VILVDDVLYTGRT) is the PRPP-binding element.

The protein belongs to the purine/pyrimidine phosphoribosyltransferase family. PyrR subfamily. In terms of assembly, homodimer and homohexamer; in equilibrium.

The catalysed reaction is UMP + diphosphate = 5-phospho-alpha-D-ribose 1-diphosphate + uracil. In terms of biological role, regulates transcriptional attenuation of the pyrimidine nucleotide (pyr) operon by binding in a uridine-dependent manner to specific sites on pyr mRNA. This disrupts an antiterminator hairpin in the RNA and favors formation of a downstream transcription terminator, leading to a reduced expression of downstream genes. Also displays a weak uracil phosphoribosyltransferase activity which is not physiologically significant. The chain is Bifunctional protein PyrR from Bacillus mycoides (strain KBAB4) (Bacillus weihenstephanensis).